Here is a 473-residue protein sequence, read N- to C-terminus: Photosystem II CP43 reaction center protein (473 aa).

Positions 1–14 (MKTLYSLRRFYPVE) are excised as a propeptide. T15 is subject to N-acetylthreonine. Residue T15 is modified to Phosphothreonine. Helical transmembrane passes span 69–93 (LFEV…PHLA), 134–155 (LLGP…KDRN), 178–200 (KALY…RKIT), 255–275 (KPFA…LSYS), and 291–312 (WFNN…ASQA). E367 serves as a coordination point for [CaMn4O5] cluster. Residues 447–471 (RARAAAAGFEKGIDRDLEPVLSMTP) traverse the membrane as a helical segment.

It belongs to the PsbB/PsbC family. PsbC subfamily. As to quaternary structure, PSII is composed of 1 copy each of membrane proteins PsbA, PsbB, PsbC, PsbD, PsbE, PsbF, PsbH, PsbI, PsbJ, PsbK, PsbL, PsbM, PsbT, PsbX, PsbY, PsbZ, Psb30/Ycf12, at least 3 peripheral proteins of the oxygen-evolving complex and a large number of cofactors. It forms dimeric complexes. Binds multiple chlorophylls and provides some of the ligands for the Ca-4Mn-5O cluster of the oxygen-evolving complex. It may also provide a ligand for a Cl- that is required for oxygen evolution. PSII binds additional chlorophylls, carotenoids and specific lipids. serves as cofactor.

It localises to the plastid. The protein localises to the chloroplast thylakoid membrane. One of the components of the core complex of photosystem II (PSII). It binds chlorophyll and helps catalyze the primary light-induced photochemical processes of PSII. PSII is a light-driven water:plastoquinone oxidoreductase, using light energy to abstract electrons from H(2)O, generating O(2) and a proton gradient subsequently used for ATP formation. This Acorus calamus var. americanus (American sweet flag) protein is Photosystem II CP43 reaction center protein.